Consider the following 410-residue polypeptide: Lissencephaly-1 homolog (410 aa).

The LisH domain maps to 7 to 39; it reads QRDELNRAIADYLRSNGYEEAYSTFKKEAELDN. A coiled-coil region spans residues 32–82; it reads KKEAELDNNEELDKKYAGLLEKKWTSVIRLQKKVMELESKLNEAKEEITLG. WD repeat units follow at residues 106–147, 148–189, 190–229, 232–271, 274–333, 336–375, and 378–410; these read GHRS…RTLK, GHTD…RTMH, GHDH…CVKT, GHRE…CKAE, EHEH…CLMT, GHDN…CMKT, and AHEH…WECR.

It belongs to the WD repeat LIS1/nudF family. As to quaternary structure, can self-associate. Component of the cytosolic PAF-AH (I) heterotetrameric enzyme, which is composed of PAFAH1B1 (beta), PAFAH1B2 (alpha2) and PAFAH1B3 (alpha1) subunits. The catalytic activity of the enzyme resides in the alpha1 (PAFAH1B3) and alpha2 (PAFAH1B2) subunits, whereas the beta subunit (PAFAH1B1) has regulatory activity. Trimer formation is not essential for the catalytic activity. Interacts with dynein, dynactin, nde1 and ndel1.

The protein resides in the cytoplasm. It localises to the cytoskeleton. Its subcellular location is the microtubule organizing center. It is found in the centrosome. Regulatory subunit (beta subunit) of the cytosolic type I platelet-activating factor (PAF) acetylhydrolase (PAF-AH (I)), an enzyme that catalyzes the hydrolyze of the acetyl group at the sn-2 position of PAF and its analogs and participates in the PAF inactivation. Positively regulates the activity of the minus-end directed microtubule motor protein dynein. May enhance dynein-mediated microtubule sliding by targeting dynein to the microtubule plus end. Required for several dynein- and microtubule-dependent processes such as the maintenance of Golgi integrity, the peripheral transport of microtubule fragments and the coupling of the nucleus and centrosome. May be required for proliferation of neuronal precursors and neuronal migration. The polypeptide is Lissencephaly-1 homolog (pafah1b1) (Tetraodon nigroviridis (Spotted green pufferfish)).